A 489-amino-acid polypeptide reads, in one-letter code: Pre-glycoprotein polyprotein GP complex (489 aa).

Gly2 is lipidated: N-myristoyl glycine; by host. Over 2–17 (GQIVTFFQEVPHILEE) the chain is Extracellular. Residues 18 to 33 (VMNIVLMTLSILAILK) traverse the membrane as a helical segment. Over 34-58 (GIYNVMTCGIIGLITFLFLCGRSCS) the chain is Cytoplasmic. Cys57 contributes to the Zn(2+) binding site. The Extracellular segment spans residues 59–430 (SIYKDNYEFF…QSTTPLGLVD (372 aa)). Residues Asn78, Asn88, Asn98, Asn108, Asn118, and Asn166 are each glycosylated (N-linked (GlcNAc...) asparagine; by host). Intrachain disulfides connect Cys85-Cys229, Cys117-Cys154, Cys179-Cys210, Cys277-Cys290, Cys299-Cys308, and Cys362-Cys383. N-linked (GlcNAc...) asparagine; by host glycosylation is present at Asn222. Residues Asn363, Asn371, Asn388, and Asn393 are each glycosylated (N-linked (GlcNAc...) asparagine; by host). A helical transmembrane segment spans residues 431-451 (LFVFSTSFYLISVFLHLIKIP). Topologically, residues 452–489 (THRHIKGKPCPKPHRLNHMAICSCGFYKQPGLPTQWKR) are cytoplasmic. 6 residues coordinate Zn(2+): His453, His455, Cys461, His465, Cys473, and Cys475.

The protein belongs to the arenaviridae GPC protein family. In terms of assembly, interacts with glycoprotein G2. Part of the GP complex (GP-C) together with glycoprotein G1 and glycoprotein G2. The GP-complex interacts with protein Z, which interacts with ribonucleocapsid; these interactions may induce virion budding. As to quaternary structure, homotrimer; disulfide-linked. In pre-fusion state, G1 homotrimers bind G2 homotrimers via ionic interactions. Part of the GP complex (GP-C) together with glycoprotein G2 and the stable signal peptide. The GP-complex interacts with protein Z, which interacts with ribonucleocapsid; these interactions may induce virion budding. Homotrimer. Interacts with the stable signal peptide. In pre-fusion state, G2 homotrimers bind G1 homotrimers via ionic interactions. Part of the GP complex (GP-C) together with glycoprotein G1 and the stable signal peptide. Acidification in the endosome triggers rearrangements, which ultimately leads to a 6 helix bundle formed by the two heptad repeat domains (HR1 and HR2) in post-fusion state. The GP-complex interacts with protein Z, which interacts with ribonucleocapsid; these interactions may induce virion budding. Specific enzymatic cleavages in vivo yield mature proteins. GP-C polyprotein is cleaved in the endoplasmic reticulum by the host protease MBTPS1. Only cleaved glycoprotein is incorporated into virions. In terms of processing, the SSP remains stably associated with the GP complex following cleavage by signal peptidase and plays crucial roles in the trafficking of GP through the secretory pathway. Post-translationally, myristoylation is necessary for GP2-mediated fusion activity.

It localises to the virion membrane. It is found in the host endoplasmic reticulum membrane. The protein resides in the host Golgi apparatus membrane. The protein localises to the host cell membrane. Functionally, functions as a cleaved signal peptide that is retained as the third component of the GP complex (GP-C). Helps to stabilize the spike complex in its native conformation. The SSP is required for efficient glycoprotein expression, post-translational maturation cleavage of G1 and G2, glycoprotein transport to the cell surface plasma membrane, formation of infectious virus particles, and acid pH-dependent glycoprotein-mediated cell fusion. In terms of biological role, forms the virion spikes together with glycoprotein G2. The glycoprotein spike trimers are connected to the underlying matrix. Interacts with the host receptor leading to virus endocytosis. Forms the virion spikes together with glycoprotein G1. The glycoprotein spike trimers are connected to the underlying matrix. Class I viral fusion protein that directs fusion of viral and host endosomal membranes, leading to delivery of the nucleocapsid into the cytoplasm. Membrane fusion is mediated by irreversible conformational changes induced by acidification. The protein is Pre-glycoprotein polyprotein GP complex of Mastomys natalensis (African soft-furred rat).